We begin with the raw amino-acid sequence, 453 residues long: Glutamyl-tRNA(Gln) amidotransferase subunit A (453 aa).

Catalysis depends on charge relay system residues K56 and S131. Catalysis depends on S155, which acts as the Acyl-ester intermediate.

It belongs to the amidase family. GatA subfamily. As to quaternary structure, heterotrimer of A, B and C subunits.

It catalyses the reaction L-glutamyl-tRNA(Gln) + L-glutamine + ATP + H2O = L-glutaminyl-tRNA(Gln) + L-glutamate + ADP + phosphate + H(+). Functionally, allows the formation of correctly charged Gln-tRNA(Gln) through the transamidation of misacylated Glu-tRNA(Gln) in organisms which lack glutaminyl-tRNA synthetase. The reaction takes place in the presence of glutamine and ATP through an activated gamma-phospho-Glu-tRNA(Gln). This chain is Glutamyl-tRNA(Gln) amidotransferase subunit A, found in Campylobacter jejuni subsp. jejuni serotype O:6 (strain 81116 / NCTC 11828).